A 397-amino-acid polypeptide reads, in one-letter code: Phosphoglycerate kinase (397 aa).

Residues 21 to 23, R36, 59 to 62, R119, and R152 contribute to the substrate site; these read DVN and HFGR. ATP-binding positions include K202, E324, and 354–357; that span reads GGDT.

The protein belongs to the phosphoglycerate kinase family. As to quaternary structure, monomer.

It localises to the cytoplasm. The catalysed reaction is (2R)-3-phosphoglycerate + ATP = (2R)-3-phospho-glyceroyl phosphate + ADP. It participates in carbohydrate degradation; glycolysis; pyruvate from D-glyceraldehyde 3-phosphate: step 2/5. This chain is Phosphoglycerate kinase, found in Cereibacter sphaeroides (strain ATCC 17029 / ATH 2.4.9) (Rhodobacter sphaeroides).